A 559-amino-acid polypeptide reads, in one-letter code: DNA ligase (559 aa).

Glu-247 contacts ATP. Lys-249 serves as the catalytic N6-AMP-lysine intermediate. ATP is bound by residues Arg-254, Arg-269, Glu-299, Phe-339, Arg-414, and Lys-420.

The protein belongs to the ATP-dependent DNA ligase family. Mg(2+) serves as cofactor.

It catalyses the reaction ATP + (deoxyribonucleotide)n-3'-hydroxyl + 5'-phospho-(deoxyribonucleotide)m = (deoxyribonucleotide)n+m + AMP + diphosphate.. In terms of biological role, DNA ligase that seals nicks in double-stranded DNA during DNA replication, DNA recombination and DNA repair. This Pyrococcus abyssi (strain GE5 / Orsay) protein is DNA ligase.